The primary structure comprises 532 residues: Cytokinin dehydrogenase 1 (532 aa).

A signal peptide spans 1–17 (MAAIYLLIAALIASSHA). N-linked (GlcNAc...) asparagine glycans are attached at residues Asn-52 and Asn-63. In terms of domain architecture, FAD-binding PCMH-type spans 65-244 (TAALPAAVLF…TRARVAVEPA (180 aa)). FAD contacts are provided by Phe-100, Gly-102, Arg-103, and Gly-104. A Pros-8alpha-FAD histidine modification is found at His-105. Positions 106 and 110 each coordinate FAD. Residue Asn-133 is glycosylated (N-linked (GlcNAc...) asparagine). Residues Asp-168, Thr-173, Ser-179, Val-183, and Ile-234 each coordinate FAD. Residues Asn-321 and Asn-432 are each glycosylated (N-linked (GlcNAc...) asparagine). Residues Tyr-490, Ser-525, and Gln-528 each coordinate FAD.

The protein belongs to the oxygen-dependent FAD-linked oxidoreductase family. In terms of assembly, monomer. It depends on FAD as a cofactor.

The protein resides in the secreted. It localises to the extracellular space. It catalyses the reaction N(6)-dimethylallyladenine + A + H2O = 3-methyl-2-butenal + adenine + AH2. Catalyzes the oxidation of cytokinins, a family of N(6)-substituted adenine derivatives that are plant hormones, where the substituent is an isopentenyl group. The sequence is that of Cytokinin dehydrogenase 1 (CKX1) from Oryza sativa subsp. japonica (Rice).